The sequence spans 45 residues: Thymosin beta-15A (45 aa).

Basic and acidic residues-rich tracts occupy residues 1–27 (MSDKPDLSEVEKFDRSKLKKTNTEEKN) and 35–45 (IQQEKECVQTS). The interval 1 to 45 (MSDKPDLSEVEKFDRSKLKKTNTEEKNTLPSKETIQQEKECVQTS) is disordered.

Belongs to the thymosin beta family. In terms of tissue distribution, neuroblastoma-specific.

It is found in the cytoplasm. The protein resides in the cytoskeleton. Functionally, plays an important role in the organization of the cytoskeleton. Binds to and sequesters actin monomers (G actin) and therefore inhibits actin polymerization. This Homo sapiens (Human) protein is Thymosin beta-15A (TMSB15A).